The chain runs to 350 residues: MSKVGIVSWGAYIPKYRIRTEEVARIWGDDPLRIVDVYLVDEKSVESLDEDAVTIAVEAARRALKRAGINPKRIGAVYVGTESKPYAVKPISSILVDALGLSNNVFAVDMEFACKAGSEGLVAAIGLVESGRIEYGMTVGTDTSQGEPGEHLEYSASSGGASLIVGRDGVVAELEAVYSYVSDTPDFWRREGSPYPMHGEGFTGEPAYFRHIIGAARGLMERYGYKPSDFAYVVFHQPNGRFPVRAASMLNIPMEKVKPGIVVTHIGNTYNASALMGFAKVLDIAKPGDKILLVPFGSGAGSNAFVFTVTELITERQKSGVPTVEDMLRDKIYIDYAQYLKMRKMIKLFE.

D30 contacts (3S)-3-hydroxy-3-methylglutaryl-CoA. E82 acts as the Proton donor/acceptor in catalysis. The (3S)-3-hydroxy-3-methylglutaryl-CoA site is built by C114, S155, T203, and H236. The active-site Acyl-thioester intermediate is C114. H236 (proton donor/acceptor) is an active-site residue. R241 lines the CoA pocket. The (3S)-3-hydroxy-3-methylglutaryl-CoA site is built by R245, N268, and S298.

It belongs to the thiolase-like superfamily. Archaeal HMG-CoA synthase family. In terms of assembly, interacts with acetoacetyl-CoA thiolase that catalyzes the precedent step in the pathway and with a DUF35 protein. The acetoacetyl-CoA thiolase/HMG-CoA synthase complex channels the intermediate via a fused CoA-binding site, which allows for efficient coupling of the endergonic thiolase reaction with the exergonic HMGCS reaction.

It carries out the reaction acetoacetyl-CoA + acetyl-CoA + H2O = (3S)-3-hydroxy-3-methylglutaryl-CoA + CoA + H(+). It functions in the pathway metabolic intermediate biosynthesis; (R)-mevalonate biosynthesis; (R)-mevalonate from acetyl-CoA: step 2/3. Functionally, catalyzes the condensation of acetyl-CoA with acetoacetyl-CoA to form 3-hydroxy-3-methylglutaryl-CoA (HMG-CoA). Functions in the mevalonate (MVA) pathway leading to isopentenyl diphosphate (IPP), a key precursor for the biosynthesis of isoprenoid compounds that are building blocks of archaeal membrane lipids. The chain is Hydroxymethylglutaryl-CoA synthase from Pyrobaculum aerophilum (strain ATCC 51768 / DSM 7523 / JCM 9630 / CIP 104966 / NBRC 100827 / IM2).